A 408-amino-acid polypeptide reads, in one-letter code: Protein SLX4IP (408 aa).

Residues K61 and K79 each participate in a glycyl lysine isopeptide (Lys-Gly) (interchain with G-Cter in SUMO2) cross-link. S130 bears the Phosphoserine mark. Glycyl lysine isopeptide (Lys-Gly) (interchain with G-Cter in SUMO2) cross-links involve residues K167 and K176. The segment at 173 to 226 is disordered; it reads TETKSSVTSKSQTRRDTVETSSDSVIAEIARRRNDGQASSSPPSESMGQAKDSI. Residues 208-219 are compositionally biased toward polar residues; it reads GQASSSPPSESM. S213 is subject to Phosphoserine. Glycyl lysine isopeptide (Lys-Gly) (interchain with G-Cter in SUMO2) cross-links involve residues K239 and K242. The span at 243 to 255 shows a compositional bias: polar residues; it reads VNQTQPEDTSGQQ. The tract at residues 243-313 is disordered; it reads VNQTQPEDTS…DFDHHGRVSL (71 aa). Residues K256, K291, K347, K356, and K372 each participate in a glycyl lysine isopeptide (Lys-Gly) (interchain with G-Cter in SUMO2) cross-link. Positions 365-408 are disordered; sequence LSSRHLMKNNPGQAQQTGLATNTERLSTIQNSPTKKRKKYERGH. Residues 374-397 are compositionally biased toward polar residues; that stretch reads NPGQAQQTGLATNTERLSTIQNSP. The residue at position 392 (T392) is a Phosphothreonine. The segment covering 398 to 408 has biased composition (basic residues); it reads TKKRKKYERGH. A Glycyl lysine isopeptide (Lys-Gly) (interchain with G-Cter in SUMO2) cross-link involves residue K399.

This sequence belongs to the SLX4IP family. Interacts with SLX4/BTBD12; subunit of different structure-specific endonucleases.

The chain is Protein SLX4IP (SLX4IP) from Homo sapiens (Human).